A 100-amino-acid polypeptide reads, in one-letter code: Large ribosomal subunit protein uL23 (100 aa).

The protein belongs to the universal ribosomal protein uL23 family. As to quaternary structure, part of the 50S ribosomal subunit. Contacts protein L29, and trigger factor when it is bound to the ribosome.

Its function is as follows. One of the early assembly proteins it binds 23S rRNA. One of the proteins that surrounds the polypeptide exit tunnel on the outside of the ribosome. Forms the main docking site for trigger factor binding to the ribosome. This is Large ribosomal subunit protein uL23 from Mycobacterium sp. (strain JLS).